The sequence spans 193 residues: Orotate phosphoribosyltransferase (193 aa).

A 5-phospho-alpha-D-ribose 1-diphosphate-binding site is contributed by 116 to 124 (EDVVTTGKS). The orotate site is built by T120 and R148.

Belongs to the purine/pyrimidine phosphoribosyltransferase family. PyrE subfamily. In terms of assembly, homodimer. Requires Mg(2+) as cofactor.

It catalyses the reaction orotidine 5'-phosphate + diphosphate = orotate + 5-phospho-alpha-D-ribose 1-diphosphate. Its pathway is pyrimidine metabolism; UMP biosynthesis via de novo pathway; UMP from orotate: step 1/2. Its function is as follows. Catalyzes the transfer of a ribosyl phosphate group from 5-phosphoribose 1-diphosphate to orotate, leading to the formation of orotidine monophosphate (OMP). This is Orotate phosphoribosyltransferase from Clostridium tetani (strain Massachusetts / E88).